The following is a 289-amino-acid chain: Oxaloacetate decarboxylase (289 aa).

Ser47 is a binding site for substrate. Asp85 is a binding site for Mg(2+). Substrate contacts are provided by Arg156 and His232.

The protein belongs to the isocitrate lyase/PEP mutase superfamily. Oxaloacetate decarboxylase family. As to quaternary structure, homotetramer; dimer of dimers. Requires Mg(2+) as cofactor.

The catalysed reaction is oxaloacetate + H(+) = pyruvate + CO2. Its function is as follows. Catalyzes the decarboxylation of oxaloacetate into pyruvate. Seems to play a role in maintaining cellular concentrations of bicarbonate and pyruvate. This Rhodopseudomonas palustris (strain HaA2) protein is Oxaloacetate decarboxylase.